Consider the following 252-residue polypeptide: Probable phosphatase Shewana3_2794 (252 aa).

Residues His-8, His-10, His-16, His-41, Glu-74, His-102, His-132, Asp-193, and His-195 each contribute to the Zn(2+) site.

The protein belongs to the PHP family. Zn(2+) serves as cofactor.

This is Probable phosphatase Shewana3_2794 from Shewanella sp. (strain ANA-3).